The primary structure comprises 285 residues: Nucleotide-binding protein PSPPH_4154 (285 aa).

8–15 (GRSGSGKS) contributes to the ATP binding site. Position 60–63 (60–63 (DARN)) interacts with GTP.

It belongs to the RapZ-like family.

Displays ATPase and GTPase activities. This chain is Nucleotide-binding protein PSPPH_4154, found in Pseudomonas savastanoi pv. phaseolicola (strain 1448A / Race 6) (Pseudomonas syringae pv. phaseolicola (strain 1448A / Race 6)).